The following is a 137-amino-acid chain: Secreted RxLR effector protein 67 (137 aa).

The N-terminal stretch at 1–18 is a signal peptide; that stretch reads MRLYILVLAAIAVTLVFA. The short motif at 32–61 is the RxLR-dEER element; the sequence is RALRQASITDEKSDDSLNAQAPPLSKSEKR. Residues 40–65 are disordered; it reads TDEKSDDSLNAQAPPLSKSEKRLSRS. A helical transmembrane segment spans residues 114-134; sequence WFVRMILEAGIFWAVFHCLSA.

It belongs to the RxLR effector family.

It localises to the secreted. The protein localises to the host cytoplasm. The protein resides in the host nucleus. Its subcellular location is the membrane. Functionally, effector that partially suppresses the tobacco programmed cell death induced by cell death-inducing proteins. This is Secreted RxLR effector protein 67 from Plasmopara viticola (Downy mildew of grapevine).